Reading from the N-terminus, the 190-residue chain is Surfactant protein C (190 aa).

The propeptide occupies 1 to 23; sequence MDVGSKEVLIENPPDYSAAPQGR. A lipid anchor (S-palmitoyl cysteine) is attached at cysteine 28. Positions 59–190 are excised as a propeptide; sequence HMSQKHTEMV…LCGEVPLYYI (132 aa). The 97-residue stretch at 94–190 folds into the BRICHOS domain; that stretch reads FSIGSTGIVV…LCGEVPLYYI (97 aa). A disulfide bond links cysteine 121 and cysteine 182.

It is found in the secreted. Its subcellular location is the extracellular space. It localises to the surface film. Functionally, pulmonary surfactant associated proteins promote alveolar stability by lowering the surface tension at the air-liquid interface in the peripheral air spaces. This is Surfactant protein C (SFTPC) from Neovison vison (American mink).